The following is a 371-amino-acid chain: Probable dual-specificity RNA methyltransferase RlmN (371 aa).

Catalysis depends on Glu-114, which acts as the Proton acceptor. In terms of domain architecture, Radical SAM core spans 120–346; that stretch reads DGPRRSICVS…ESAGVNVNFR (227 aa). Cys-127 and Cys-357 are joined by a disulfide. [4Fe-4S] cluster is bound by residues Cys-134, Cys-138, and Cys-141. S-adenosyl-L-methionine contacts are provided by residues 183-184, Ser-215, 238-240, and Asn-314; these read GE and SLH. Cys-357 (S-methylcysteine intermediate) is an active-site residue.

This sequence belongs to the radical SAM superfamily. RlmN family. [4Fe-4S] cluster is required as a cofactor.

The protein resides in the cytoplasm. It carries out the reaction adenosine(2503) in 23S rRNA + 2 reduced [2Fe-2S]-[ferredoxin] + 2 S-adenosyl-L-methionine = 2-methyladenosine(2503) in 23S rRNA + 5'-deoxyadenosine + L-methionine + 2 oxidized [2Fe-2S]-[ferredoxin] + S-adenosyl-L-homocysteine. The catalysed reaction is adenosine(37) in tRNA + 2 reduced [2Fe-2S]-[ferredoxin] + 2 S-adenosyl-L-methionine = 2-methyladenosine(37) in tRNA + 5'-deoxyadenosine + L-methionine + 2 oxidized [2Fe-2S]-[ferredoxin] + S-adenosyl-L-homocysteine. Functionally, specifically methylates position 2 of adenine 2503 in 23S rRNA and position 2 of adenine 37 in tRNAs. This is Probable dual-specificity RNA methyltransferase RlmN from Rhodopirellula baltica (strain DSM 10527 / NCIMB 13988 / SH1).